Consider the following 67-residue polypeptide: Inosine/xanthosine triphosphatase (67 aa).

It belongs to the YjjX NTPase family. Homodimer. The cofactor is Mg(2+). Requires Mn(2+) as cofactor.

It catalyses the reaction XTP + H2O = XDP + phosphate + H(+). The enzyme catalyses ITP + H2O = IDP + phosphate + H(+). Its function is as follows. Phosphatase that hydrolyzes non-canonical purine nucleotides such as XTP and ITP to their respective diphosphate derivatives. Probably excludes non-canonical purines from DNA/RNA precursor pool, thus preventing their incorporation into DNA/RNA and avoiding chromosomal lesions. The sequence is that of Inosine/xanthosine triphosphatase from Enterobacter cloacae.